The primary structure comprises 32 residues: Photosystem II reaction center protein T (32 aa).

The helical transmembrane segment at Ser3–Phe23 threads the bilayer.

It belongs to the PsbT family. PSII is composed of 1 copy each of membrane proteins PsbA, PsbB, PsbC, PsbD, PsbE, PsbF, PsbH, PsbI, PsbJ, PsbK, PsbL, PsbM, PsbT, PsbX, PsbY, PsbZ, Psb30/Ycf12, peripheral proteins PsbO, CyanoQ (PsbQ), PsbU, PsbV and a large number of cofactors. It forms dimeric complexes.

The protein resides in the cellular thylakoid membrane. Functionally, found at the monomer-monomer interface of the photosystem II (PS II) dimer, plays a role in assembly and dimerization of PSII. PSII is a light-driven water plastoquinone oxidoreductase, using light energy to abstract electrons from H(2)O, generating a proton gradient subsequently used for ATP formation. This is Photosystem II reaction center protein T from Cyanothece sp. (strain PCC 7425 / ATCC 29141).